The sequence spans 248 residues: 1-(5-phosphoribosyl)-5-[(5-phosphoribosylamino)methylideneamino] imidazole-4-carboxamide isomerase (248 aa).

Residue D8 is the Proton acceptor of the active site. D130 acts as the Proton donor in catalysis.

It belongs to the HisA/HisF family.

Its subcellular location is the cytoplasm. It carries out the reaction 1-(5-phospho-beta-D-ribosyl)-5-[(5-phospho-beta-D-ribosylamino)methylideneamino]imidazole-4-carboxamide = 5-[(5-phospho-1-deoxy-D-ribulos-1-ylimino)methylamino]-1-(5-phospho-beta-D-ribosyl)imidazole-4-carboxamide. It participates in amino-acid biosynthesis; L-histidine biosynthesis; L-histidine from 5-phospho-alpha-D-ribose 1-diphosphate: step 4/9. The polypeptide is 1-(5-phosphoribosyl)-5-[(5-phosphoribosylamino)methylideneamino] imidazole-4-carboxamide isomerase (Alkalilimnicola ehrlichii (strain ATCC BAA-1101 / DSM 17681 / MLHE-1)).